We begin with the raw amino-acid sequence, 726 residues long: Peroxisomal fatty acid beta-oxidation multifunctional protein (726 aa).

In the N-terminal section; belongs to the enoyl-CoA hydratase/isomerase family. The protein in the central section; belongs to the 3-hydroxyacyl-CoA dehydrogenase family. As to quaternary structure, monomer.

It localises to the peroxisome. It is found in the cytoplasm. The protein localises to the cytoskeleton. It catalyses the reaction a (3S)-3-hydroxyacyl-CoA = a (2E)-enoyl-CoA + H2O. The catalysed reaction is a 4-saturated-(3S)-3-hydroxyacyl-CoA = a (3E)-enoyl-CoA + H2O. It carries out the reaction a (3Z)-enoyl-CoA = a 4-saturated (2E)-enoyl-CoA. The enzyme catalyses a (3E)-enoyl-CoA = a 4-saturated (2E)-enoyl-CoA. It catalyses the reaction (3S)-3-hydroxybutanoyl-CoA = (3R)-3-hydroxybutanoyl-CoA. The catalysed reaction is a (3S)-3-hydroxyacyl-CoA + NAD(+) = a 3-oxoacyl-CoA + NADH + H(+). It functions in the pathway lipid metabolism; fatty acid beta-oxidation. In terms of biological role, multifunctional enzyme involved in fatty acid beta-oxidation. Also binds to RNA and microtubules. Possible role in subcellular mRNA localization and RNA-cytoskeleton interactions. This is Peroxisomal fatty acid beta-oxidation multifunctional protein (MFP) from Oryza sativa subsp. japonica (Rice).